The chain runs to 442 residues: Divalent metal cation transporter MntH (442 aa).

Helical transmembrane passes span 29–49 (MLAY…PGNW), 62–82 (TLLT…SLCV), 106–126 (FCLW…ELLG), 135–155 (FVIP…VLLF), 166–186 (ALVI…ILFS), 209–229 (MLYI…LYLH), 258–278 (FALS…AATF), 295–315 (LLSP…ALLA), 347–367 (LITR…FGEN), 372–392 (LIVL…IPLV), and 413–433 (LAWL…LQSL).

Belongs to the NRAMP family.

The protein localises to the cell inner membrane. H(+)-stimulated, divalent metal cation uptake system. This chain is Divalent metal cation transporter MntH, found in Nostoc sp. (strain PCC 7120 / SAG 25.82 / UTEX 2576).